A 217-amino-acid chain; its full sequence is Meiotic expression up-regulated protein 29 (217 aa).

The N-terminal stretch at 1 to 21 (MFVVKTAVLLFFALFIGNTYA) is a signal peptide. The Extracellular portion of the chain corresponds to 22-133 (YTYSLDRIQA…SGVLLHRPWK (112 aa)). A glycan (N-linked (GlcNAc...) asparagine) is linked at Asn-84. Residues 134 to 154 (LFSLKPFTAAFVLLLAASYLA) traverse the membrane as a helical segment. The Cytoplasmic segment spans residues 155–217 (TACFRMLGYL…VPVPVLDESV (63 aa)).

It localises to the membrane. In Schizosaccharomyces pombe (strain 972 / ATCC 24843) (Fission yeast), this protein is Meiotic expression up-regulated protein 29 (meu29).